The chain runs to 379 residues: Chaperone protein DnaJ (379 aa).

The region spanning 5–70 (DYYELLEVSR…QKRAAYDQFG (66 aa)) is the J domain. A CR-type zinc finger spans residues 135 to 213 (GKEVEITVPR…CHGQGRVRES (79 aa)). Positions 148, 151, 165, 168, 187, 190, 201, and 204 each coordinate Zn(2+). 4 CXXCXGXG motif repeats span residues 148–155 (CTVCEGSG), 165–172 (CETCQGMG), 187–194 (CPTCHGEG), and 201–208 (CASCHGQG).

It belongs to the DnaJ family. Homodimer. Zn(2+) is required as a cofactor.

It localises to the cytoplasm. In terms of biological role, participates actively in the response to hyperosmotic and heat shock by preventing the aggregation of stress-denatured proteins and by disaggregating proteins, also in an autonomous, DnaK-independent fashion. Unfolded proteins bind initially to DnaJ; upon interaction with the DnaJ-bound protein, DnaK hydrolyzes its bound ATP, resulting in the formation of a stable complex. GrpE releases ADP from DnaK; ATP binding to DnaK triggers the release of the substrate protein, thus completing the reaction cycle. Several rounds of ATP-dependent interactions between DnaJ, DnaK and GrpE are required for fully efficient folding. Also involved, together with DnaK and GrpE, in the DNA replication of plasmids through activation of initiation proteins. In Legionella pneumophila (strain Corby), this protein is Chaperone protein DnaJ.